The following is a 140-amino-acid chain: Alpha-lactalbumin (140 aa).

Residues 1–19 (MMSLLPLLLIGIVLPATQA) form the signal peptide. In terms of domain architecture, C-type lysozyme spans 20–140 (KDYGKCELNQ…CRENLDQWNC (121 aa)). Cystine bridges form between C25-C140, C47-C131, C80-C96, and C92-C110. Positions 98, 101, 103, 106, and 107 each coordinate Ca(2+).

In terms of assembly, lactose synthase (LS) is a heterodimer of a catalytic component, beta1,4-galactosyltransferase (beta4Gal-T1) and a regulatory component, alpha-lactalbumin (LA). Mammary gland specific. Secreted in milk.

The protein localises to the secreted. Functionally, regulatory subunit of lactose synthase, changes the substrate specificity of galactosyltransferase in the mammary gland making glucose a good acceptor substrate for this enzyme. This enables LS to synthesize lactose, the major carbohydrate component of milk. In other tissues, galactosyltransferase transfers galactose onto the N-acetylglucosamine of the oligosaccharide chains in glycoproteins. The polypeptide is Alpha-lactalbumin (LALBA) (Trichosurus vulpecula (Brush-tailed possum)).